We begin with the raw amino-acid sequence, 1500 residues long: Host cell factor (1500 aa).

Kelch repeat units lie at residues leucine 85–threonine 133, methionine 135–histidine 181, lysine 189–aspartate 237, asparagine 259–asparagine 307, and lysine 308–serine 373. At serine 477 the chain carries Phosphoserine. The segment covering leucine 517–alanine 528 has biased composition (polar residues). The disordered stretch occupies residues leucine 517–threonine 543. 2 positions are modified to phosphoserine: serine 958 and serine 966. The segment at serine 1024–glutamine 1061 is disordered. The span at asparagine 1036 to alanine 1047 shows a compositional bias: low complexity. At threonine 1126 the chain carries Phosphothreonine. Residues isoleucine 1161–asparagine 1185 are disordered. Residues glutamate 1166 to glutamine 1178 are compositionally biased toward basic and acidic residues. Fibronectin type-III domains lie at valine 1244–proline 1341 and alanine 1346–alanine 1457. The segment at alanine 1458–aspartate 1500 is disordered. A Bipartite nuclear localization signal motif is present at residues lysine 1470–arginine 1495. The segment covering threonine 1477–cysteine 1488 has biased composition (polar residues). Phosphoserine is present on serine 1489. Basic residues predominate over residues proline 1490–aspartate 1500.

In terms of assembly, core component of several methyltransferase-containing complexes. Component of the SET1 complex, composed at least of the catalytic subunit Set1, wds/WDR5, Wdr82, Rbbp5, ash2, Cfp1/CXXC1, hcf and Dpy-30L1. Component of the MLL3/4 complex composed at least of the catalytic subunit trr, ash2, Rbbp5, Dpy-30L1, wds, hcf, ptip, Pa1, Utx, Lpt and Ncoa6. Component of the Ada2a-containing (ATAC) complex composed of at least Ada2a, Atac1, Hcf, Ada3, Gcn5, Mocs2B, Charac-14, Atac3, Atac2, NC2beta and wds. Proteolytic cleavage occurs between amino acids 900 and 1100 within the non-conserved central region, giving rise to two independent but tightly associated N- and C-terminal subunits.

It localises to the nucleus. In terms of biological role, may be involved in control of the cell cycle. In Drosophila melanogaster (Fruit fly), this protein is Host cell factor.